A 560-amino-acid polypeptide reads, in one-letter code: Nuclear hormone receptor family member nhr-8 (560 aa).

The interval 1 to 21 is disordered; sequence MPSSSPSMDESRRSAVPPKEP. A DNA-binding region (nuclear receptor) is located at residues 23–98; that stretch reads GRICTVCSDR…VGMNSEWLND (76 aa). NR C4-type zinc fingers lie at residues 26 to 46 and 62 to 86; these read CTVC…CESC and CPFS…LNKC. In terms of domain architecture, NR LBD spans 336-560; that stretch reads DEITLLEELH…PLIRELCSFE (225 aa).

The protein belongs to the nuclear hormone receptor family.

The protein localises to the nucleus. Orphan nuclear receptor. In Caenorhabditis elegans, this protein is Nuclear hormone receptor family member nhr-8 (nhr-8).